The primary structure comprises 84 residues: uncharacterized protein (84 aa).

A compositionally biased stretch (low complexity) spans 1–14 (MQKLNKSSSKGKNN). A disordered region spans residues 1–84 (MQKLNKSSSK…VDKGERKESE (84 aa)). Residues 28–40 (STYGFGPYGGGGF) show a composition bias toward gly residues. Composition is skewed to basic and acidic residues over residues 53–65 (DTKKLKGEVEEGT) and 73–84 (KLVDKGERKESE).

This is an uncharacterized protein from Schizosaccharomyces pombe (strain 972 / ATCC 24843) (Fission yeast).